Here is a 276-residue protein sequence, read N- to C-terminus: 4-deoxy-L-threo-5-hexosulose-uronate ketol-isomerase (276 aa).

Residues histidine 194, histidine 196, glutamate 201, and histidine 243 each contribute to the Zn(2+) site.

This sequence belongs to the KduI family. The cofactor is Zn(2+).

It carries out the reaction 5-dehydro-4-deoxy-D-glucuronate = 3-deoxy-D-glycero-2,5-hexodiulosonate. It functions in the pathway glycan metabolism; pectin degradation; 2-dehydro-3-deoxy-D-gluconate from pectin: step 4/5. Its function is as follows. Catalyzes the isomerization of 5-dehydro-4-deoxy-D-glucuronate to 3-deoxy-D-glycero-2,5-hexodiulosonate. This Caldicellulosiruptor bescii (strain ATCC BAA-1888 / DSM 6725 / KCTC 15123 / Z-1320) (Anaerocellum thermophilum) protein is 4-deoxy-L-threo-5-hexosulose-uronate ketol-isomerase.